The following is a 314-amino-acid chain: DNA oxidative demethylase ALKBH2 (314 aa).

Residues 1-28 show a composition bias toward polar residues; that stretch reads MTNPLNSTAANRSNQPSSDGISDGQITN. Positions 1–75 are disordered; sequence MTNPLNSTAA…KRFHYHQDQR (75 aa). The segment covering 57 to 75 has biased composition (basic and acidic residues); sequence NGKDDSDTKKRFHYHQDQR. Substrate-binding positions include Trp132 and 160 to 163; that span reads ALVY. Positions 194-314 constitute a Fe2OG dioxygenase domain; sequence RFNSLLLNRY…RINLTFRLVL (121 aa). 201–203 contacts 2-oxoglutarate; it reads NRY. Positions 213 and 215 each coordinate Fe cation. Asp216 contributes to the substrate binding site. A disordered region spans residues 242–271; it reads KKDEESSQGKTGDSGPAKKRLKRSSREDQQ. His293 provides a ligand contact to Fe cation. Residues Arg305 and 305 to 311 each bind 2-oxoglutarate; that span reads RINLTFR.

Belongs to the alkB family. Fe(2+) is required as a cofactor. In terms of tissue distribution, expressed ubiquitously, including in seedlings, leaves and flowers.

It localises to the nucleus. It carries out the reaction a methylated nucleobase within DNA + 2-oxoglutarate + O2 = a nucleobase within DNA + formaldehyde + succinate + CO2. In terms of biological role, dioxygenase that repairs alkylated DNA containing 1-methyladenine and 1-ethenoadenine by oxidative demethylation. Accepts double-stranded and single-stranded substrates, with a preference for dsDNA over ssDNA. Confers resistance to methylating agents such as methylmethanesulphonate (MMS). This is DNA oxidative demethylase ALKBH2 (ALKBH2) from Arabidopsis thaliana (Mouse-ear cress).